The chain runs to 726 residues: NHL repeat-containing protein 2 (726 aa).

Residues 43–200 (QKVDGWEQDL…TSIALKYYKD (158 aa)) enclose the Thioredoxin domain. NHL repeat units follow at residues 212–254 (KLYK…VWKN), 265–307 (NPGR…IDLE), 335–369 (ISSP…IWAL), 409–439 (FAQP…VRTV), 461–505 (AFGD…VDPK), and 518–562 (TNNV…MDLE).

In terms of assembly, monomer. Ubiquitous. Detected in heart, kidney, muscle, brain, lung, liver and in skin fibroblasts (at protein level).

It is found in the cytoplasm. The protein resides in the cytosol. In terms of biological role, required for normal embryonic development. The sequence is that of NHL repeat-containing protein 2 (NHLRC2) from Homo sapiens (Human).